A 633-amino-acid chain; its full sequence is Threonine--tRNA ligase (633 aa).

The TGS domain maps to 1-61 (MPAIRLPDGS…DHDVDLAIVT (61 aa)). The segment at 242-533 (DHRKLGRQLD…LIEHHAGAMP (292 aa)) is catalytic. 3 residues coordinate Zn(2+): C333, H384, and H510.

The protein belongs to the class-II aminoacyl-tRNA synthetase family. As to quaternary structure, homodimer. It depends on Zn(2+) as a cofactor.

It is found in the cytoplasm. The enzyme catalyses tRNA(Thr) + L-threonine + ATP = L-threonyl-tRNA(Thr) + AMP + diphosphate + H(+). In terms of biological role, catalyzes the attachment of threonine to tRNA(Thr) in a two-step reaction: L-threonine is first activated by ATP to form Thr-AMP and then transferred to the acceptor end of tRNA(Thr). Also edits incorrectly charged L-seryl-tRNA(Thr). In Laribacter hongkongensis (strain HLHK9), this protein is Threonine--tRNA ligase.